We begin with the raw amino-acid sequence, 747 residues long: Nucleolar complex-associated protein 3 (747 aa).

Positions 1-11 are enriched in basic residues; it reads MAARKNQKSPK. The interval 1 to 142 is disordered; the sequence is MAARKNQKSP…EDEQDYELRP (142 aa). Residues 74 to 86 are compositionally biased toward polar residues; the sequence is ENPSSLKYLSSIN. Basic and acidic residues predominate over residues 89 to 109; that stretch reads DLGKKVEKGPRPDIYDLKKSQ. Ser120 carries the phosphoserine modification. Residues 214 to 234 are a coiled coil; sequence KQQIKNDKEALGIQAQQLLEE.

This sequence belongs to the CBF/MAK21 family.

Its subcellular location is the nucleus. It localises to the nucleolus. In terms of biological role, may be required for synthesis of 60S ribosomal subunits and the transport of pre-ribosomes from the nucleoplasm to the cytoplasm. This Schizosaccharomyces pombe (strain 972 / ATCC 24843) (Fission yeast) protein is Nucleolar complex-associated protein 3 (noc3).